A 140-amino-acid polypeptide reads, in one-letter code: Mite allergen Der p 21.0101 (140 aa).

Residues 1 to 19 (MKFIITLFAAIVMAAAVSG) form the signal peptide. Immunodominant conformational IgE-binding epitope stretches follow at residues 20 to 53 (FIVG…EKGL) and 108 to 140 (YNYE…DEYY).

It belongs to the mite group 5 allergen family. Monomer. Homodimer. Expressed in the epithelium, lumen and microvilli of the midgut, and in feces.

Its subcellular location is the cytoplasm. It localises to the endoplasmic reticulum. The protein resides in the vesicle. It is found in the secreted. In Dermatophagoides pteronyssinus (European house dust mite), this protein is Mite allergen Der p 21.0101.